The sequence spans 2049 residues: MGRLGEAKAVDLEAETSTVGLYDVCTVGRILPLLNEMSIDKKSPAWKLKPKSNERFLVLASCSDLAVFSLGEKSDYSFNTGLGGAITDFEILGSSSFFVGVIEHRRIVILSLDKQEIYLNEPAPHEIDFVVCHTTSSVCQLIFGSRSDNWHTITLPGDVAASKETNRFENWHRDQIQEFFHQAMGKTVSKSVDMSKVAGDITLISNGPLQTFASIDQQRGIHWCGLVESEFEVIGMEKQFLQVRDGGRFSLHLDTDGWIHVFDSLVSSFCHEFDMKMSPDDKILDFVIIDKNEVEVPKMFAILVLPRDGDSTKMMIYDRLNKDNCFALDSSTSTTLFAYGGSDRVLIAVEELENSLADEQDGSQIVVRQVSQSRPEMRFESLLKNNRFEEAEKFAMAFMLDVQKVYKGHVHYLMDSCDESDESFETLMTKMGQIQDHNMVAETYFTLVGMSRRCDRIRTYLTHAKKRRITDLDILKMIEALCYTWGTYRIIAGPEENEPSRPQVNETIWDLFVEALHDANPWIEIYNEFISDAQFTQARVIFSRHGKSITDYMCDDEENTISRLETLFRMFIDAISSDISKWSNVIEHVTTDILPACVMITEELIPCLESLITSLISLLEYRDSTNWPENAIKAASSYDTMTKILSNNGNTPATQCILVMYGSKLGSSAGNKPSSMSRIKKIYYDLIELKRLKDVYECSISFSVFQNMSSEQICHKILQNALANPNMTHAKIEKFVKPFMAERHLDQEQTIVNYIQMMSGAAVTNANLFGWEKQCVQLCASLMDETRRCCSIISIASTAKIPWPAELNEAVEKILASRTLLRSEIEQMHLVCKRTELYKMLSSYGFSRQDIELLTTPDSNMDIILTIRCMLAHREKASRFVDVIKLVDLLKAMQGSSQPRTLRIEYVQSFAIIHMMSHQDVTISIINYIDSLGDRERVKTISLVFSFIECVANAPATGDNVLEREKILGVGEELMSHYTCRDNNFNDPERRLKDELVLLREVQKTETKAVLLSELKDEDWQRRFLERLIESNSSMSLNLGRCSYMGISPEHLIEMILTKATVENDMDTIVDSITNYVEFINSLTDSSREMLEPIVQILSWITFRLPKLLPNETEMARADYIAFVVKRIGRVVRETLRRFSFDVISDDLDYLLQLEAFYHLGEHIIKQSLRGQENENEKQEMFRSDDDTFLPTDSSNPFSNQSSLRIFEFKRPLGTFDFSNDPALFEGVQGVLALAMVAPSVARPYDSEISPDDANEFRSSWEQLNMFLAMHSQDLLDISARVFAGSLKCWAGEYLQGIVEMEQPILSVVERMLQQKKFDFWHAVTLLGGIPLERLDRAIIDLQKRQGVRSSTKATIQYLQLAFVMSLLARNMEKVPTIVSAYEQKYLVKKLAEEGIRVSITQDFVDKVLQQAIDLRQPLSPLRLHDYVKKYVEKLIRNSKISVGEYMVRYATLLIRKASVAGRHTDREIRKEEIEKYIEAARIALRIAEEEDASCICNYLHCLLYVVCPYNYEVIQFIVTSYGKYATETVEIEFNKNLKSIMAFLWAYQRTNHISNEESIWFTKRESVLMKDEKEFEKTGRMLDPFGHSLRVVYEDDGSNMSDSYNSDLALSSDAMVYERNSVIISDLPSLAEQYLPFHAFLLRKKEEIDEIVMGIVKAELSIFNVPIWQTFLREVSWLSSRFSRSQLLSSAIFAHANKYAKFGKSLPDGERNVIYELLNSASQRHVVVSTIALLFKRIILSDVKIELLQMGVNISERWTSDLTGEEQQEMEEQSARLKDGIAKFSTELELKKNGLYNEKTADNIENVSELCSLIYNEMVQWDDSRDVLKKCQVVDKIAKANGLDLTALHEQLVFSWVEDTQTIISINHVDMNESIGGTSFLDHKDETDDQNDLRIPLFDGILDKVVVLCQRIDKKRLLTRLGSILMRGGRKATGGYTAVVRATCIILRSFTDTEVSELLSGADMFALCSTLENQLYERLFEKAEVKGDCKTDKMQLIKSLLQCPSRTHPMTALIACLIIDHEFKDPKRDISLGWDVGCVPVSANSSNS.

As to quaternary structure, component of the RZZ complex composed of rod-1, czw-1 and zwl-1. Interacts (via N-terminus) with NDC80 complex component ndc-80.

The protein resides in the chromosome. It is found in the centromere. The protein localises to the kinetochore. It localises to the cytoplasm. Its subcellular location is the cytoskeleton. The protein resides in the spindle. In terms of biological role, essential component of the mitotic checkpoint, which prevents cells from prematurely exiting mitosis. Required for chromosome segregation, the assembly of the dynein-dynactin and mdf-1-mdf-2 complexes onto kinetochores and spindle pole separation. Plays a role in nuclear envelope breakdown. Its function related to the spindle assembly machinery and kinetochore-microtubule attachments likely depends on its association in the mitotic RZZ complex. The RZZ complex recruits the spindly-like protein spdl-1 to kinetochores. To prevent irregular chromosome segregation, the complex also inhibits the attachment of the kinetochore-associated NDC80 complex to microtubules. The recruitment of spdl-1 to kinetochores relieves this inhibition. Required for embryonic development. This chain is Kinetochore-associated protein rod-1, found in Caenorhabditis elegans.